A 572-amino-acid chain; its full sequence is Proline--tRNA ligase (572 aa).

This sequence belongs to the class-II aminoacyl-tRNA synthetase family. ProS type 1 subfamily. Homodimer.

The protein localises to the cytoplasm. The catalysed reaction is tRNA(Pro) + L-proline + ATP = L-prolyl-tRNA(Pro) + AMP + diphosphate. Its function is as follows. Catalyzes the attachment of proline to tRNA(Pro) in a two-step reaction: proline is first activated by ATP to form Pro-AMP and then transferred to the acceptor end of tRNA(Pro). As ProRS can inadvertently accommodate and process non-cognate amino acids such as alanine and cysteine, to avoid such errors it has two additional distinct editing activities against alanine. One activity is designated as 'pretransfer' editing and involves the tRNA(Pro)-independent hydrolysis of activated Ala-AMP. The other activity is designated 'posttransfer' editing and involves deacylation of mischarged Ala-tRNA(Pro). The misacylated Cys-tRNA(Pro) is not edited by ProRS. The sequence is that of Proline--tRNA ligase from Erwinia tasmaniensis (strain DSM 17950 / CFBP 7177 / CIP 109463 / NCPPB 4357 / Et1/99).